The chain runs to 897 residues: Isoleucine--tRNA ligase (897 aa).

A 'HIGH' region motif is present at residues proline 59 to histidine 69. Glutamate 553 serves as a coordination point for L-isoleucyl-5'-AMP. Positions lysine 594 to serine 598 match the 'KMSKS' region motif. Lysine 597 contacts ATP. The Zn(2+) site is built by cysteine 866, cysteine 869, cysteine 883, and cysteine 886.

Belongs to the class-I aminoacyl-tRNA synthetase family. IleS type 1 subfamily. Monomer. It depends on Zn(2+) as a cofactor.

It localises to the cytoplasm. It carries out the reaction tRNA(Ile) + L-isoleucine + ATP = L-isoleucyl-tRNA(Ile) + AMP + diphosphate. In terms of biological role, catalyzes the attachment of isoleucine to tRNA(Ile). As IleRS can inadvertently accommodate and process structurally similar amino acids such as valine, to avoid such errors it has two additional distinct tRNA(Ile)-dependent editing activities. One activity is designated as 'pretransfer' editing and involves the hydrolysis of activated Val-AMP. The other activity is designated 'posttransfer' editing and involves deacylation of mischarged Val-tRNA(Ile). The polypeptide is Isoleucine--tRNA ligase (Mycoplasmopsis synoviae (strain 53) (Mycoplasma synoviae)).